A 288-amino-acid chain; its full sequence is Energy-coupling factor transporter ATP-binding protein EcfA2 (288 aa).

In terms of domain architecture, ABC transporter spans 3–243; it reads IVFEAVSHIY…RAELEAIGLG (241 aa). 40–47 contacts ATP; that stretch reads GPTGSGKS.

Belongs to the ABC transporter superfamily. Energy-coupling factor EcfA family. Forms a stable energy-coupling factor (ECF) transporter complex composed of 2 membrane-embedded substrate-binding proteins (S component), 2 ATP-binding proteins (A component) and 2 transmembrane proteins (T component).

The protein resides in the cell membrane. In terms of biological role, ATP-binding (A) component of a common energy-coupling factor (ECF) ABC-transporter complex. Unlike classic ABC transporters this ECF transporter provides the energy necessary to transport a number of different substrates. This is Energy-coupling factor transporter ATP-binding protein EcfA2 from Symbiobacterium thermophilum (strain DSM 24528 / JCM 14929 / IAM 14863 / T).